A 272-amino-acid polypeptide reads, in one-letter code: Isoprenyl transferase (272 aa).

Residue Asp32 is part of the active site. Asp32 is a Mg(2+) binding site. Substrate contacts are provided by residues 33 to 36, Trp37, Arg45, His49, and 77 to 79; these read GNGR and STE. Asn80 (proton acceptor) is an active-site residue. Substrate is bound by residues Trp81, Arg83, Arg200, and 206-208; that span reads RIS. Glu219 is a binding site for Mg(2+).

This sequence belongs to the UPP synthase family. Homodimer. Mg(2+) is required as a cofactor.

In terms of biological role, catalyzes the condensation of isopentenyl diphosphate (IPP) with allylic pyrophosphates generating different type of terpenoids. The protein is Isoprenyl transferase of Prochlorococcus marinus subsp. pastoris (strain CCMP1986 / NIES-2087 / MED4).